Here is a 64-residue protein sequence, read N- to C-terminus: Alpha-conotoxin-like Lp1.7 (64 aa).

The N-terminal stretch at 1-21 (MGMRMMFTMFLLVVLTTTVVS) is a signal peptide. Positions 22–41 (FNSDRESNHENRRTSNQITR) are excised as a propeptide. Cystine bridges form between Cys47–Cys53 and Cys48–Cys61. The segment at 49–51 (DDP) is lacks the Ser-Xaa-Pro motif that is crucial for potent interaction with nAChR.

The protein belongs to the conotoxin A superfamily. In terms of tissue distribution, expressed by the venom duct.

It localises to the secreted. In terms of biological role, alpha-conotoxins act on postsynaptic membranes, they bind to the nicotinic acetylcholine receptors (nAChR) and thus inhibit them. Has possibly a distinct nAChR binding mode from other alpha-conotoxins, due to a different three residue motif (lacks the Ser-Xaa-Pro motif). This Conus leopardus (Leopard cone) protein is Alpha-conotoxin-like Lp1.7.